The primary structure comprises 343 residues: Heat-inducible transcription repressor HrcA (343 aa).

The protein belongs to the HrcA family.

In terms of biological role, negative regulator of class I heat shock genes (grpE-dnaK-dnaJ and groELS operons). Prevents heat-shock induction of these operons. The protein is Heat-inducible transcription repressor HrcA of Clostridium botulinum (strain Eklund 17B / Type B).